A 210-amino-acid chain; its full sequence is Orotate phosphoribosyltransferase (210 aa).

Residues Arg94, Lys98, His100, and 120-128 (EDLISTGGS) contribute to the 5-phospho-alpha-D-ribose 1-diphosphate site. Ser124 is an orotate binding site.

Belongs to the purine/pyrimidine phosphoribosyltransferase family. PyrE subfamily. As to quaternary structure, homodimer. It depends on Mg(2+) as a cofactor.

The enzyme catalyses orotidine 5'-phosphate + diphosphate = orotate + 5-phospho-alpha-D-ribose 1-diphosphate. It functions in the pathway pyrimidine metabolism; UMP biosynthesis via de novo pathway; UMP from orotate: step 1/2. Catalyzes the transfer of a ribosyl phosphate group from 5-phosphoribose 1-diphosphate to orotate, leading to the formation of orotidine monophosphate (OMP). The polypeptide is Orotate phosphoribosyltransferase (Bacillus cytotoxicus (strain DSM 22905 / CIP 110041 / 391-98 / NVH 391-98)).